Consider the following 151-residue polypeptide: Ribonuclease H (151 aa).

One can recognise an RNase H type-1 domain in the interval 1–146 (MSDLFAYTDG…ADELARAGMA (146 aa)). Mg(2+) is bound by residues Asp-9, Glu-52, Asp-74, and Asp-138.

The protein belongs to the RNase H family. In terms of assembly, monomer. Mg(2+) serves as cofactor.

The protein localises to the cytoplasm. The enzyme catalyses Endonucleolytic cleavage to 5'-phosphomonoester.. Its function is as follows. Endonuclease that specifically degrades the RNA of RNA-DNA hybrids. The polypeptide is Ribonuclease H (Cereibacter sphaeroides (strain ATCC 17025 / ATH 2.4.3) (Rhodobacter sphaeroides)).